Consider the following 222-residue polypeptide: Cytochrome b6 (222 aa).

Residues 39 to 59 traverse the membrane as a helical segment; sequence IFYCLGGITLVCFLVQFATGF. Residue Cys42 participates in heme c binding. Heme b is bound by residues His93 and His107. Transmembrane regions (helical) follow at residues 97-117, 123-143, and 193-213; these read ASMMVLMMILHVFRVYLTGGF, LTWMTGVILAVITVSFGVTGY, and LHTFVFPWLIAVFMLAHFLMI. Heme b-binding residues include His194 and His209.

It belongs to the cytochrome b family. PetB subfamily. In terms of assembly, the 4 large subunits of the cytochrome b6-f complex are cytochrome b6, subunit IV (17 kDa polypeptide, PetD), cytochrome f and the Rieske protein, while the 4 small subunits are PetG, PetL, PetM and PetN. The complex functions as a dimer. It depends on heme b as a cofactor. The cofactor is heme c.

It localises to the cellular thylakoid membrane. Functionally, component of the cytochrome b6-f complex, which mediates electron transfer between photosystem II (PSII) and photosystem I (PSI), cyclic electron flow around PSI, and state transitions. This Crocosphaera subtropica (strain ATCC 51142 / BH68) (Cyanothece sp. (strain ATCC 51142)) protein is Cytochrome b6.